We begin with the raw amino-acid sequence, 243 residues long: UPF0758 protein Cyan7425_1778 (243 aa).

One can recognise an MPN domain in the interval 112–235 (TIINDPAVAA…FRSLRQTTKL (124 aa)). Residues H184, H186, and D197 each coordinate Zn(2+). Residues 184–197 (HNHPSGNVEPSPED) carry the JAMM motif motif.

It belongs to the UPF0758 family.

This is UPF0758 protein Cyan7425_1778 from Cyanothece sp. (strain PCC 7425 / ATCC 29141).